The chain runs to 416 residues: Serine hydroxymethyltransferase 1 (416 aa).

(6S)-5,6,7,8-tetrahydrofolate contacts are provided by residues L121 and 125-127; that span reads GHL. Position 229 is an N6-(pyridoxal phosphate)lysine (K229). (6S)-5,6,7,8-tetrahydrofolate-binding positions include E245 and 354-356; that span reads SPF.

It belongs to the SHMT family. Homodimer. The cofactor is pyridoxal 5'-phosphate.

The protein localises to the cytoplasm. The catalysed reaction is (6R)-5,10-methylene-5,6,7,8-tetrahydrofolate + glycine + H2O = (6S)-5,6,7,8-tetrahydrofolate + L-serine. The protein operates within one-carbon metabolism; tetrahydrofolate interconversion. It functions in the pathway amino-acid biosynthesis; glycine biosynthesis; glycine from L-serine: step 1/1. Catalyzes the reversible interconversion of serine and glycine with tetrahydrofolate (THF) serving as the one-carbon carrier. This reaction serves as the major source of one-carbon groups required for the biosynthesis of purines, thymidylate, methionine, and other important biomolecules. Also exhibits THF-independent aldolase activity toward beta-hydroxyamino acids, producing glycine and aldehydes, via a retro-aldol mechanism. The protein is Serine hydroxymethyltransferase 1 of Vibrio parahaemolyticus serotype O3:K6 (strain RIMD 2210633).